The following is a 102-amino-acid chain: Protein 108 (102 aa).

The N-terminal stretch at 1-30 (MASVKSSSSSSSSSFISLLLLILLVIVLQS) is a signal peptide. Intrachain disulfides connect cysteine 41/cysteine 77, cysteine 51/cysteine 66, cysteine 67/cysteine 92, and cysteine 79/cysteine 99.

This sequence belongs to the A9/FIL1 family. Stamen- and tapetum-specific.

It is found in the secreted. The protein is Protein 108 of Solanum lycopersicum (Tomato).